Consider the following 265-residue polypeptide: NAD kinase (265 aa).

Catalysis depends on aspartate 45, which acts as the Proton acceptor. NAD(+)-binding positions include 45-46 (DG), 121-122 (NE), arginine 147, aspartate 149, 160-165 (TAYSKS), alanine 184, and glutamine 222.

This sequence belongs to the NAD kinase family. It depends on a divalent metal cation as a cofactor.

It is found in the cytoplasm. The catalysed reaction is NAD(+) + ATP = ADP + NADP(+) + H(+). Its function is as follows. Involved in the regulation of the intracellular balance of NAD and NADP, and is a key enzyme in the biosynthesis of NADP. Catalyzes specifically the phosphorylation on 2'-hydroxyl of the adenosine moiety of NAD to yield NADP. This chain is NAD kinase, found in Lacticaseibacillus paracasei (strain ATCC 334 / BCRC 17002 / CCUG 31169 / CIP 107868 / KCTC 3260 / NRRL B-441) (Lactobacillus paracasei).